The following is a 582-amino-acid chain: MVEGGIAKADKTEFTECWRTTWKTPYIMRLALSAGIGGLLFGYDTGVISGALLFIKEDFDEVDKKTWLQSTIVSMAVAGAIVGAAVGGWINDKFGRRMSILIADVLFLIGAIVMAFAPAPWVIIVGRIFVGFGVGMASMTSPLYISEASPARIRGALVSTNGLLITGGQFFSYLINLAFVHTPGTWRWMLGVAGVPAIVQFVLMLSLPESPRWLYRKDRIAESRAILERIYPADEVEAEMEALKLSVEAEKADEAIIGDSFSAKLKGAFGNPVVRRGLAAGITVQVAQQFVGINTVMYYSPSIVQFAGYASNKTAMALSLITSGLNALGSIVSMMFVDRYGRRKLMIISMFGIIACLIILATVFSQAAIHAPKIDAFESRTFAPNATCSAYAPLAAENAPPSRWNCMKCLRSECGFCASGVQPYAPGACVVLSDDMKATCSSRGRTFFKDGCPSKFGFLAIVFLGLYIVVYAPGMGTVPWIVNSEIYPLRYRGLGGGIAAVSNWVSNLIVSESFLSLTHALGSSGTFLLFAGFSTIGLFFIWLLVPETKGLQFEEVEKLLEVGFKPSLLRRREKKGKEVDAA.

12 helical membrane passes run 35 to 55 (GIGG…LLFI), 70 to 90 (STIV…GGWI), 105 to 125 (VLFL…VIIV), 128 to 148 (IFVG…ISEA), 162 to 182 (GLLI…FVHT), 188 to 208 (WMLG…LSLP), 290 to 310 (FVGI…AGYA), 317 to 337 (ALSL…MMFV), 345 to 365 (LMII…TVFS), 456 to 476 (FGFL…PGMG), 494 to 514 (LGGG…SESF), and 525 to 545 (GTFL…WLLV).

The protein belongs to the major facilitator superfamily. Sugar transporter (TC 2.A.1.1) family. In terms of tissue distribution, highly expressed in pollen and phloem companion cells.

The protein resides in the cell membrane. Functionally, plasma membrane inositol-proton symporter. Mediates high-affinity myoinositol-proton symport across the plasma membrane. Active with myoinositol, scylloinositol and D-chiroinositol. Low activity with mucoinositol and alloinositol. In Arabidopsis thaliana (Mouse-ear cress), this protein is Inositol transporter 4 (INT4).